A 436-amino-acid polypeptide reads, in one-letter code: Serine protease inhibitor A6 (436 aa).

Positions 1–16 (MHLLVYLSLFFALALA) are cleaved as a signal peptide. Positions 26–60 (KHRHRHEQQGHHDSAKHGHQKDKQQQEQIKNDEGK) are disordered. The span at 32 to 60 (EQQGHHDSAKHGHQKDKQQQEQIKNDEGK) shows a compositional bias: basic and acidic residues. N-linked (GlcNAc...) asparagine glycans are attached at residues Asn260 and Asn289.

This sequence belongs to the serpin family. In terms of tissue distribution, liver.

It is found in the secreted. Its subcellular location is the extracellular space. Functionally, not yet known. This Xenopus laevis (African clawed frog) protein is Serine protease inhibitor A6 (serpina6).